The chain runs to 114 residues: Probable 4-amino-4-deoxy-L-arabinose-phosphoundecaprenol flippase subunit ArnE (114 aa).

A run of 3 helical transmembrane segments spans residues 38 to 58 (LTLR…LLWL), 64 to 84 (LPLS…TLAA), and 94 to 114 (LRHW…SWHL). Residues 43 to 112 (LAIAVVSLGL…IIFGILLMSW (70 aa)) form the EamA domain.

It belongs to the ArnE family. In terms of assembly, heterodimer of ArnE and ArnF.

Its subcellular location is the cell inner membrane. The protein operates within bacterial outer membrane biogenesis; lipopolysaccharide biosynthesis. Its function is as follows. Translocates 4-amino-4-deoxy-L-arabinose-phosphoundecaprenol (alpha-L-Ara4N-phosphoundecaprenol) from the cytoplasmic to the periplasmic side of the inner membrane. The sequence is that of Probable 4-amino-4-deoxy-L-arabinose-phosphoundecaprenol flippase subunit ArnE from Yersinia pseudotuberculosis serotype O:1b (strain IP 31758).